The primary structure comprises 141 residues: uncharacterized protein (141 aa).

This is an uncharacterized protein from Saccharomyces cerevisiae (strain ATCC 204508 / S288c) (Baker's yeast).